We begin with the raw amino-acid sequence, 513 residues long: ATP synthase subunit alpha (513 aa).

169-176 (GDRQTGKT) serves as a coordination point for ATP.

The protein belongs to the ATPase alpha/beta chains family. As to quaternary structure, F-type ATPases have 2 components, CF(1) - the catalytic core - and CF(0) - the membrane proton channel. CF(1) has five subunits: alpha(3), beta(3), gamma(1), delta(1), epsilon(1). CF(0) has three main subunits: a(1), b(2) and c(9-12). The alpha and beta chains form an alternating ring which encloses part of the gamma chain. CF(1) is attached to CF(0) by a central stalk formed by the gamma and epsilon chains, while a peripheral stalk is formed by the delta and b chains.

The protein resides in the cell inner membrane. It carries out the reaction ATP + H2O + 4 H(+)(in) = ADP + phosphate + 5 H(+)(out). Functionally, produces ATP from ADP in the presence of a proton gradient across the membrane. The alpha chain is a regulatory subunit. This chain is ATP synthase subunit alpha, found in Haemophilus influenzae (strain PittGG).